Reading from the N-terminus, the 202-residue chain is Type II restriction enzyme MunI (202 aa).

As to quaternary structure, homodimer.

It catalyses the reaction Endonucleolytic cleavage of DNA to give specific double-stranded fragments with terminal 5'-phosphates.. Functionally, a P subtype restriction enzyme that recognizes the double-stranded sequence 5'-CAATTG-3' and cleaves after C-1. This is Type II restriction enzyme MunI from Mycoplasma sp.